The primary structure comprises 248 residues: Tetrachloro-P-hydroquinone reductive dehalogenase (248 aa).

One can recognise a GST N-terminal domain in the interval 2-84; the sequence is PEVSLYNYTM…EAAKLGKVGI (83 aa). One can recognise a GST C-terminal domain in the interval 133–248; it reads YAEKYPELRS…RVMPNWKGGI (116 aa).

This sequence belongs to the GST superfamily. In terms of assembly, homodimer.

The catalysed reaction is 2,6-dichlorohydroquinone + glutathione disulfide + chloride + H(+) = 2,3,6-trichlorohydroquinone + 2 glutathione. It catalyses the reaction 2,3,6-trichlorohydroquinone + glutathione disulfide + chloride = 2,3,5,6-tetrachlorohydroquinone + 2 glutathione. The protein operates within xenobiotic degradation; pentachlorophenol degradation. Its function is as follows. Sequential reduction of tetrachloro-p-hydroquinone to monochlorophenol, using glutathione as the reducing agent. This is Tetrachloro-P-hydroquinone reductive dehalogenase (pcpC) from Sphingobium chlorophenolicum.